The chain runs to 270 residues: tRNA pseudouridine synthase A (270 aa).

The active-site Nucleophile is the Asp-60. The segment at 107-111 (FHARF) is RNA binding. Tyr-118 lines the substrate pocket. The tract at residues 168 to 172 (QCQSR) is interaction with tRNA.

This sequence belongs to the tRNA pseudouridine synthase TruA family. In terms of assembly, homodimer.

The enzyme catalyses uridine(38/39/40) in tRNA = pseudouridine(38/39/40) in tRNA. Formation of pseudouridine at positions 38, 39 and 40 in the anticodon stem and loop of transfer RNAs. The polypeptide is tRNA pseudouridine synthase A (Enterobacter sp. (strain 638)).